The primary structure comprises 529 residues: Delayed-rectifier potassium channel regulatory subunit KCNS1 (529 aa).

Residues 1–217 (MLMLLVRGTH…LTMENPGYSL (217 aa)) are Cytoplasmic-facing. The chain crosses the membrane as a helical span at residues 218 to 239 (PSKLFSCVSIGVVLASIAAMCI). The Extracellular segment spans residues 240–270 (HSLPEYQAREAAAAVATVAAGRSAEDVRDDP). A helical membrane pass occupies residues 271-293 (VLRRLEYFCIAWFSFEVSSRLLL). Residues 294-304 (APSTRNFFCHP) lie on the Cytoplasmic side of the membrane. The chain crosses the membrane as a helical span at residues 305-322 (LNLIDIVSVLPFYLTLLA). Topologically, residues 323–342 (SVALGGNNHGGTSGEELGHL) are extracellular. Residues 343 to 363 (GKVVQVFRLMRIFRVLKLARH) traverse the membrane as a helical; Voltage-sensor segment. The Cytoplasmic segment spans residues 364 to 378 (STGLRSLGATLKHSY). A helical transmembrane segment spans residues 379–400 (REVGILLLYLAVGVSVFSGVAY). At 401–413 (TAEKEEDVGFDTI) the chain is on the extracellular side. An intramembrane region (helical) is located at residues 414–425 (PACWWWGTVSMT). The short motif at 426–431 (TVGYGD) is the Selectivity filter element. The stretch at 426-433 (TVGYGDVV) is an intramembrane region. Residues 434-440 (PVTLAGK) lie on the Extracellular side of the membrane. The helical transmembrane segment at 441 to 469 (LAASGCILGGILVVALPITIIFNKFSHFY) threads the bilayer. The Cytoplasmic segment spans residues 470–529 (QRQKALEAAVRNSGHREFEDLLSSVDGVSDASLETSRETSQEGRSADLEAPSESPKPQIY). The tract at residues 498–529 (SDASLETSRETSQEGRSADLEAPSESPKPQIY) is disordered. Basic and acidic residues predominate over residues 504–516 (TSRETSQEGRSAD).

This sequence belongs to the potassium channel family. S (TC 1.A.1.2) subfamily. Kv9.1/KCNS1 sub-subfamily. Heterotetramer with KCNB1. Heterotetramer with KCNB2. Does not form homomultimers.

It localises to the cell membrane. Functionally, potassium channel regulatory subunit that modulate the delayed rectifier voltage-gated potassium channel activity of KCNB1 and KCNB2 by altering their kinetics, expression levels, and shifting the half-inactivation potential to more polarized values. While it does not form functional channels on its own, it can form functional heterotetrameric channels with KCNB1 and KCNB2. Each regulatory subunit has unique regulatory properties that can lead to extensive inhibition, significant changes in kinetics, and/or substantial shifts in the voltage dependencies of the inactivation process. In Lemur catta (Ring-tailed lemur), this protein is Delayed-rectifier potassium channel regulatory subunit KCNS1.